We begin with the raw amino-acid sequence, 336 residues long: Syntaxin-31 (336 aa).

Over 1–314 the chain is Cytoplasmic; that stretch reads MGSTFRDRTV…QHLTRISSNR (314 aa). Disordered regions lie at residues 23-53 and 152-218; these read GAIP…KASR and RSEN…SQLR. Over residues 154–163 the composition is skewed to basic and acidic residues; that stretch reads ENMKAHENRK. Positions 164–181 are enriched in polar residues; the sequence is QLFSTKNAVDSPPQNNAK. Over residues 190–202 the composition is skewed to low complexity; it reads SSSSNPFGNLQQP. Residues 244 to 306 enclose the t-SNARE coiled-coil homology domain; it reads ENYSQSRAVA…EGARSALLQH (63 aa). Residues 315–335 form a helical; Anchor for type IV membrane protein membrane-spanning segment; sequence WLMMKIFAVIILFLIVFLFFV. Position 336 (alanine 336) is a topological domain, vesicular.

Belongs to the syntaxin family. As to quaternary structure, part of the t-SNARE complex. Interacts with CDC48A, but not with VPS45.

Its subcellular location is the golgi apparatus. The protein localises to the cis-Golgi network membrane. It is found in the cytoplasm. It localises to the endosome. Vesicle trafficking protein that functions in the secretory pathway. The polypeptide is Syntaxin-31 (SYP31) (Arabidopsis thaliana (Mouse-ear cress)).